Reading from the N-terminus, the 378-residue chain is MQSAIKSVEYDRPLAAGAACGVGEAWAKVPDALVPDERDALKARIKALLVREKAVLVAHYYVDADLQALADETGGCVADSLEMARFGRDHDAHTLVVAGVRFMGETAKILSPGKRVLMPDLDATCSLDLGCPIDEFSQFCDAHPERTVVVYANTSAAVKARADWMVTSSIGLEIVADLHARGEKIIWAPDRHLGGYIQKKTGADMLMWQGSCLVHDEFKGIELDLLRHEYPDAKILVHPESPEGVVALADVVGSTTQLIDAAVKLDAQRFIVATDLGILHKMRLAAPGKTFIEAPTAGNSATCKSCAHCPWMAMNALSNLADVLERGHNEIFVEAAIAQRARMPIDRMLDFAARHKQRVQASGDLQRDQALFANVGAA.

Residues His-59 and Ser-80 each contribute to the iminosuccinate site. Cys-125 lines the [4Fe-4S] cluster pocket. Iminosuccinate is bound by residues 151-153 and Ser-168; that span reads YAN. Residue Cys-212 coordinates [4Fe-4S] cluster. Iminosuccinate-binding positions include 238–240 and Thr-255; that span reads HPE. Cys-309 serves as a coordination point for [4Fe-4S] cluster.

This sequence belongs to the quinolinate synthase family. Type 1 subfamily. [4Fe-4S] cluster is required as a cofactor.

Its subcellular location is the cytoplasm. The catalysed reaction is iminosuccinate + dihydroxyacetone phosphate = quinolinate + phosphate + 2 H2O + H(+). It participates in cofactor biosynthesis; NAD(+) biosynthesis; quinolinate from iminoaspartate: step 1/1. Functionally, catalyzes the condensation of iminoaspartate with dihydroxyacetone phosphate to form quinolinate. The polypeptide is Quinolinate synthase (Burkholderia pseudomallei (strain 668)).